The chain runs to 87 residues: U3-theraphotoxin-Hhn1o (87 aa).

Positions 1 to 24 (MVNMKASMFLTFAGLVLLFVVCYA) are cleaved as a signal peptide. Positions 25–52 (SESEEKEFPKEMLSSIFAVDNDFKQEER) are excised as a propeptide. 2 disulfides stabilise this stretch: Cys-54/Cys-67 and Cys-61/Cys-72.

Belongs to the neurotoxin 10 (Hwtx-1) family. 51 (Hntx-8) subfamily. Hntx-8 sub-subfamily. Expressed by the venom gland.

Its subcellular location is the secreted. In terms of biological role, ion channel inhibitor. In Cyriopagopus hainanus (Chinese bird spider), this protein is U3-theraphotoxin-Hhn1o.